A 179-amino-acid chain; its full sequence is ATP synthase subunit b (179 aa).

Residues 26 to 46 (FLEANLFNLAILLGIIIYYAP) traverse the membrane as a helical segment.

Belongs to the ATPase B chain family. In terms of assembly, F-type ATPases have 2 components, F(1) - the catalytic core - and F(0) - the membrane proton channel. F(1) has five subunits: alpha(3), beta(3), gamma(1), delta(1), epsilon(1). F(0) has four main subunits: a(1), b(1), b'(1) and c(10-14). The alpha and beta chains form an alternating ring which encloses part of the gamma chain. F(1) is attached to F(0) by a central stalk formed by the gamma and epsilon chains, while a peripheral stalk is formed by the delta, b and b' chains.

Its subcellular location is the cellular thylakoid membrane. F(1)F(0) ATP synthase produces ATP from ADP in the presence of a proton or sodium gradient. F-type ATPases consist of two structural domains, F(1) containing the extramembraneous catalytic core and F(0) containing the membrane proton channel, linked together by a central stalk and a peripheral stalk. During catalysis, ATP synthesis in the catalytic domain of F(1) is coupled via a rotary mechanism of the central stalk subunits to proton translocation. Its function is as follows. Component of the F(0) channel, it forms part of the peripheral stalk, linking F(1) to F(0). The sequence is that of ATP synthase subunit b from Synechocystis sp. (strain ATCC 27184 / PCC 6803 / Kazusa).